The following is a 319-amino-acid chain: Acetyl-coenzyme A carboxylase carboxyl transferase subunit alpha (319 aa).

Residues 35 to 296 enclose the CoA carboxyltransferase C-terminal domain; the sequence is NLDEEVQRLR…KAQLLDDLSE (262 aa).

It belongs to the AccA family. In terms of assembly, acetyl-CoA carboxylase is a heterohexamer composed of biotin carboxyl carrier protein (AccB), biotin carboxylase (AccC) and two subunits each of ACCase subunit alpha (AccA) and ACCase subunit beta (AccD).

Its subcellular location is the cytoplasm. It carries out the reaction N(6)-carboxybiotinyl-L-lysyl-[protein] + acetyl-CoA = N(6)-biotinyl-L-lysyl-[protein] + malonyl-CoA. Its pathway is lipid metabolism; malonyl-CoA biosynthesis; malonyl-CoA from acetyl-CoA: step 1/1. In terms of biological role, component of the acetyl coenzyme A carboxylase (ACC) complex. First, biotin carboxylase catalyzes the carboxylation of biotin on its carrier protein (BCCP) and then the CO(2) group is transferred by the carboxyltransferase to acetyl-CoA to form malonyl-CoA. In Sodalis glossinidius (strain morsitans), this protein is Acetyl-coenzyme A carboxylase carboxyl transferase subunit alpha.